A 462-amino-acid chain; its full sequence is Gamma-aminobutyric acid receptor subunit alpha-5 (462 aa).

A signal peptide spans 1–31 (MDNGMFSSFIMIKNLLLFCISMNLASHFGFS). At 32–260 (QMPTSSVKAE…FHLKRKIGYF (229 aa)) the chain is on the extracellular side. N-linked (GlcNAc...) asparagine glycosylation is present at Asn45. Arg101 is a binding site for 4-aminobutanoate. Asn145 carries an N-linked (GlcNAc...) asparagine glycan. Thr164 contributes to the 4-aminobutanoate binding site. A disulfide bridge links Cys173 with Cys187. N-linked (GlcNAc...) asparagine glycans are attached at residues Asn207 and Asn236. A run of 3 helical transmembrane segments spans residues 261–281 (VIQTYLPCIMTVILSQVSFWL), 287–308 (PARTVFGVTTVLTMTTLSISAR), and 319–340 (AMDWFIAVCYAFVFSALIEFAT). The Cytoplasmic portion of the chain corresponds to 341-427 (VNYFTKRGWA…TYNSISKIDK (87 aa)). A Glycyl lysine isopeptide (Lys-Gly) (interchain with G-Cter in ubiquitin) cross-link involves residue Lys355. Positions 375–412 (TNAYTTGKMTHPPNIPKEQTPAGTTNASSASVKPEDKA) are disordered. The segment covering 395–405 (PAGTTNASSAS) has biased composition (polar residues). The helical transmembrane segment at 428-448 (MSRIIFPLLFGTFNLVYWATY) threads the bilayer.

The protein belongs to the ligand-gated ion channel (TC 1.A.9) family. Gamma-aminobutyric acid receptor (TC 1.A.9.5) subfamily. GABRA5 sub-subfamily. As to quaternary structure, heteropentamer, formed by a combination of alpha (GABRA1-6), beta (GABRB1-3), gamma (GABRG1-3), delta (GABRD), epsilon (GABRE), rho (GABRR1-3), pi (GABRP) and theta (GABRQ) chains, each subunit exhibiting distinct physiological and pharmacological properties.

It localises to the postsynaptic cell membrane. The protein localises to the cell membrane. The enzyme catalyses chloride(in) = chloride(out). Its function is as follows. Alpha subunit of the heteropentameric ligand-gated chloride channel gated by gamma-aminobutyric acid (GABA), a major inhibitory neurotransmitter in the brain. GABA-gated chloride channels, also named GABA(A) receptors (GABAAR), consist of five subunits arranged around a central pore and contain GABA active binding site(s) located at the alpha and beta subunit interface(s). When activated by GABA, GABAARs selectively allow the flow of chloride anions across the cell membrane down their electrochemical gradient. GABAARs containing alpha-5/GABRA5 subunits are mainly extrasynaptic and contribute to the tonic GABAergic inhibition in the hippocampus. Extrasynaptic alpha-5-containing GABAARs in CA1 pyramidal neurons play a role in learning and memory processes. The protein is Gamma-aminobutyric acid receptor subunit alpha-5 (GABRA5) of Bos taurus (Bovine).